The chain runs to 636 residues: MTLEADKQTHGFQTEVKQLLQLMIHSLYSNKEIFLRELISNAADAADKLRFEALSAPSLLEEDPNLRIRVEFDKQAHTITIDDNGIGMSRDEAIAHLGTIAKSGTADFLKALSGDQRKDANLIGQFGVGFYSAFIVADHVDVYSRRAGLTAAEGVHWSSKGEGNFEVATIDKPQRGTRVVLHLKENEQHFAEGWTLRSTLKKYSDHIGLPIEMLKEHHGKEEEKDTPQEAEWEAVNKASALWTRPKNDIKDEEYQEFYKHISHDMTNPLAWSHNKVEGKLEYTSLLYVPTRAPFDLYHRNAAKGLKLYVQRVFIMDQAEQFLPLYLRFIKGVVDSADLSLNVSREILQSGPVVDSMKTALSKRALDMLEKLAKDAPEDYKTFWKNFGQVLKEGPAEDYSNREKVASLLRFASTYDTSGDPSVALTDYIARMKEGQDKLYYLTGESYAQIKDSPYLEVFRKKGIEVLLLVDRIDEWLMNYLHEFDGKSFVDIARGDLDLGNLDSEADKKAQEEIAKTKEALASRIKATLGEDVAEVRVSHRLTDSPAVLAIGEGDLGLQMRQLLEASGQKVPETKPVFEFNPSHPLIEKLDAEQDMDRFADLSRILFDQAALAAGDSLKDPANYVRRLNKLLLELSA.

Residues methionine 1–arginine 344 form an a; substrate-binding region. The tract at residues glutamate 345–glutamine 561 is b. Residues leucine 562–alanine 636 form a c region.

It belongs to the heat shock protein 90 family. In terms of assembly, homodimer.

Its subcellular location is the cytoplasm. Molecular chaperone. Has ATPase activity. This is Chaperone protein HtpG from Xylella fastidiosa (strain Temecula1 / ATCC 700964).